Reading from the N-terminus, the 122-residue chain is Large ribosomal subunit protein bL12 (122 aa).

The protein belongs to the bacterial ribosomal protein bL12 family. As to quaternary structure, homodimer. Part of the ribosomal stalk of the 50S ribosomal subunit. Forms a multimeric L10(L12)X complex, where L10 forms an elongated spine to which 2 to 4 L12 dimers bind in a sequential fashion. Binds GTP-bound translation factors.

Forms part of the ribosomal stalk which helps the ribosome interact with GTP-bound translation factors. Is thus essential for accurate translation. The polypeptide is Large ribosomal subunit protein bL12 (Staphylococcus epidermidis (strain ATCC 35984 / DSM 28319 / BCRC 17069 / CCUG 31568 / BM 3577 / RP62A)).